The primary structure comprises 266 residues: MDYINAALLGVIEGITEFLPISSTGHLIIAEQWLGHRSDMFNIVIQAGAILAVTIIYWRRLLDLVLGWREPANRDYAAKLIVAFLITAVLGLVVKKVLHFELPETATPIAWALIIGGFWMIFAEWAAARKAPHKEITWLVAILVGIAQIVAGIFPGTSRSGATIFVAMLAGTGNRAAATEFAFLVGIPTMYAASGYELLKTFKDGGAANEDWTALGIAFVVSTIVAFIAVKWLLAYIRSNRFTLFAVYRIILGVLLLGMAATGLIG.

The next 7 helical transmembrane spans lie at 38-58 (SDMFNIVIQAGAILAVTIIYW), 80-100 (LIVAFLITAVLGLVVKKVLHF), 108-128 (PIAWALIIGGFWMIFAEWAAA), 136-156 (ITWLVAILVGIAQIVAGIFPG), 176-196 (AAATEFAFLVGIPTMYAASGY), 217-237 (IAFVVSTIVAFIAVKWLLAYI), and 245-265 (FAVYRIILGVLLLGMAATGLI).

Belongs to the UppP family.

The protein resides in the cell inner membrane. It carries out the reaction di-trans,octa-cis-undecaprenyl diphosphate + H2O = di-trans,octa-cis-undecaprenyl phosphate + phosphate + H(+). Functionally, catalyzes the dephosphorylation of undecaprenyl diphosphate (UPP). Confers resistance to bacitracin. This chain is Undecaprenyl-diphosphatase, found in Rhizobium leguminosarum bv. trifolii (strain WSM2304).